The chain runs to 494 residues: V-type proton ATPase subunit B (494 aa).

It belongs to the ATPase alpha/beta chains family. V-ATPase is a heteromultimeric enzyme composed of a peripheral catalytic V1 complex (main components: subunits A, B, C, D, E, and F) attached to an integral membrane V0 proton pore complex (main component: the proteolipid protein).

In terms of biological role, non-catalytic subunit of the peripheral V1 complex of vacuolar ATPase. V-ATPase is responsible for acidifying a variety of intracellular compartments in eukaryotic cells. This is V-type proton ATPase subunit B (VAPB) from Plasmodium falciparum.